The primary structure comprises 82 residues: uncharacterized protein (82 aa).

This is an uncharacterized protein from Dictyostelium discoideum (Social amoeba).